The following is a 193-amino-acid chain: Ion-translocating oxidoreductase complex subunit A (193 aa).

6 consecutive transmembrane segments (helical) span residues 5 to 25, 39 to 59, 63 to 83, 102 to 122, 134 to 154, and 171 to 191; these read LLLL…FLGL, IGMG…SYLI, ILAP…VIAV, VLGI…VALL, IIYG…FSAM, and SIAM…TGLV.

It belongs to the NqrDE/RnfAE family. As to quaternary structure, the complex is composed of six subunits: RnfA, RnfB, RnfC, RnfD, RnfE and RnfG.

The protein localises to the cell inner membrane. Part of a membrane-bound complex that couples electron transfer with translocation of ions across the membrane. The polypeptide is Ion-translocating oxidoreductase complex subunit A (Aliivibrio salmonicida (strain LFI1238) (Vibrio salmonicida (strain LFI1238))).